Consider the following 185-residue polypeptide: Intraflagellar transport protein 22 homolog (185 aa).

Residues glycine 10–threonine 17, aspartate 63–aspartate 67, and histidine 123–glycine 126 each bind GTP. Serine 137 is subject to Phosphoserine.

The protein belongs to the small GTPase superfamily. Rab family. In terms of assembly, component of the IFT complex B, at least composed of IFT20, IFT22, IFT25, IFT27, IFT46, IFT52, TRAF3IP1/IFT54, IFT57, IFT74, IFT80, IFT81, and IFT88. Interacts with IFT88. Interacts with CFAP61.

The protein localises to the cell projection. It localises to the cilium. In terms of biological role, small GTPase-like component of the intraflagellar transport (IFT) complex B. This Homo sapiens (Human) protein is Intraflagellar transport protein 22 homolog (IFT22).